We begin with the raw amino-acid sequence, 277 residues long: Urease accessory protein UreD (277 aa).

Belongs to the UreD family. UreD, UreF and UreG form a complex that acts as a GTP-hydrolysis-dependent molecular chaperone, activating the urease apoprotein by helping to assemble the nickel containing metallocenter of UreC. The UreE protein probably delivers the nickel.

The protein localises to the cytoplasm. Its function is as follows. Required for maturation of urease via the functional incorporation of the urease nickel metallocenter. This is Urease accessory protein UreD from Yersinia pestis (strain Pestoides F).